Consider the following 556-residue polypeptide: Formate--tetrahydrofolate ligase 1 (556 aa).

65–72 (TPAGEGKT) lines the ATP pocket.

This sequence belongs to the formate--tetrahydrofolate ligase family.

It catalyses the reaction (6S)-5,6,7,8-tetrahydrofolate + formate + ATP = (6R)-10-formyltetrahydrofolate + ADP + phosphate. The protein operates within one-carbon metabolism; tetrahydrofolate interconversion. The protein is Formate--tetrahydrofolate ligase 1 of Desulfitobacterium hafniense (strain Y51).